We begin with the raw amino-acid sequence, 336 residues long: Putative ALA-interacting subunit 4 (336 aa).

The helical transmembrane segment at 36–56 threads the bilayer; the sequence is VILTFLVSGVVFIPLGVICLF. A glycan (N-linked (GlcNAc...) asparagine) is linked at asparagine 94. The segment covering 127–142 has biased composition (basic and acidic residues); it reads RQDGQLRSPKDEHETK. The disordered stretch occupies residues 127 to 148; the sequence is RQDGQLRSPKDEHETKSCAPED. Residue asparagine 167 is glycosylated (N-linked (GlcNAc...) asparagine). A helical transmembrane segment spans residues 290–310; it reads FLGIAYLTVGSICLFLAVSFS. N-linked (GlcNAc...) asparagine glycosylation occurs at asparagine 329.

This sequence belongs to the CDC50/LEM3 family. Expressed in flowers. May be restricted to pollen grains.

The protein resides in the membrane. This Arabidopsis thaliana (Mouse-ear cress) protein is Putative ALA-interacting subunit 4 (ALIS4).